The primary structure comprises 282 residues: NADPH-dependent 7-cyano-7-deazaguanine reductase (282 aa).

88–90 (IES) is a binding site for substrate. An NADPH-binding site is contributed by 90–91 (SK). Residue Cys190 is the Thioimide intermediate of the active site. Residue Asp197 is the Proton donor of the active site. Position 229–230 (229–230 (HE)) interacts with substrate. NADPH is bound at residue 258-259 (RG).

The protein belongs to the GTP cyclohydrolase I family. QueF type 2 subfamily. In terms of assembly, homodimer.

Its subcellular location is the cytoplasm. It carries out the reaction 7-aminomethyl-7-carbaguanine + 2 NADP(+) = 7-cyano-7-deazaguanine + 2 NADPH + 3 H(+). Its pathway is tRNA modification; tRNA-queuosine biosynthesis. Functionally, catalyzes the NADPH-dependent reduction of 7-cyano-7-deazaguanine (preQ0) to 7-aminomethyl-7-deazaguanine (preQ1). This chain is NADPH-dependent 7-cyano-7-deazaguanine reductase, found in Salmonella schwarzengrund (strain CVM19633).